Reading from the N-terminus, the 561-residue chain is MCGIWALFGSDDCLSVQCLSAMKIAHRGPDAFRFENVNGYTNCCFGFHRLAVVDPLFGMQPIRVRKYPYLWLCYNGEIYNHKALQQRFEFEYQTNVDGEIILHLYDKGGIEKTICMLDGVFAFILLDTANKKVFLGRDTYGVRPLFKAMTEDGFLAVCSEAKGLVSLKHSTTPFLKVEPFLPGHYEVLDLKPNGKVASVEMVKYHHCTDEPLHAIYDSVEKLFPGFDLETVKNNLRILFDNAIKKRLMTDRRIGCLLSGGLDSSLVAASLLKQLKEAQVQYPLQTFAIGMEDSPDLLAARKVANYIGSEHHEVLFNSEEGIQALDEVIFSLETYDITTVRASVGMYLISKYIRKNTDSVVIFSGEGSDELTQGYIYFHKAPSPEKAEEESERLLKELYLFDVLRADRTTAAHGLELRVPFLDHRFSSYYLSLPPDMRIPKNGIEKHLLRETFEDCNLLPKEILWRPKEAFSDGITSVKNSWFKILQDYVEHQVDDEMMSAASQKFPFNTPKTKEGYFYRQIFERHYPGRADWLTHYWMPKWINATDPSARTLTHYKSAAKA.

Cysteine 2 (for GATase activity) is an active-site residue. The 190-residue stretch at 2-191 (CGIWALFGSD…PGHYEVLDLK (190 aa)) folds into the Glutamine amidotransferase type-2 domain. Residues 49–53 (RLAVV), 75–77 (NGE), and aspartate 97 contribute to the L-glutamine site. The Asparagine synthetase domain maps to 213-536 (HAIYDSVEKL…PGRADWLTHY (324 aa)). ATP is bound by residues leucine 256, isoleucine 288, and 363-364 (SG). N6-acetyllysine is present on lysine 385. Threonine 545 carries the phosphothreonine modification. Serine 557 is modified (phosphoserine).

It carries out the reaction L-aspartate + L-glutamine + ATP + H2O = L-asparagine + L-glutamate + AMP + diphosphate + H(+). The protein operates within amino-acid biosynthesis; L-asparagine biosynthesis; L-asparagine from L-aspartate (L-Gln route): step 1/1. This is Asparagine synthetase [glutamine-hydrolyzing] (Asns) from Mus musculus (Mouse).